The sequence spans 92 residues: MTKLEDHLEGIINIFHQYSVRVGHFDTLNKRELKQLITKELPKTLQNTKDQPTIDKIFQDLDADKDGAVSFEEFVVLVSRVLKTAHIDIHKE.

EF-hand domains lie at 13 to 48 (NIFH…LQNT) and 49 to 84 (KDQP…VLKT). Cu cation is bound at residue His16. His16 provides a ligand contact to Zn(2+). Ca(2+) contacts are provided by Ser19 and His24. Asp26 contacts Cu cation. Zn(2+) is bound at residue Asp26. Residues Thr27 and Glu32 each coordinate Ca(2+). The segment at 38-53 (TKELPKTLQNTKDQPT) is hinge domain. 4 residues coordinate Ca(2+): Asp62, Asp64, Asp66, and Glu73. Residues His86 and His90 each contribute to the Cu cation site. Residues His86 and His90 each contribute to the Zn(2+) site.

It belongs to the S-100 family. As to quaternary structure, homodimer. Homooligomer (tetramer or hexamer) in the presence of calcium, zinc and copper ions. Interacts with AGER and both calcium and zinc are essential for the interaction. Interacts with CACYBP in a calcium-dependent manner. Up-regulated in stimulated inflammatory effector cells.

It is found in the secreted. It localises to the cytoplasm. Its subcellular location is the cytoskeleton. The protein localises to the cell membrane. S100A12 is a calcium-, zinc- and copper-binding protein which plays a prominent role in the regulation of inflammatory processes and immune response. Its pro-inflammatory activity involves recruitment of leukocytes, promotion of cytokine and chemokine production, and regulation of leukocyte adhesion and migration. Acts as an alarmin or a danger associated molecular pattern (DAMP) molecule and stimulates innate immune cells via binding to receptor for advanced glycation endproducts (AGER). Binding to AGER activates the MAP-kinase and NF-kappa-B signaling pathways leading to production of pro-inflammatory cytokines and up-regulation of cell adhesion molecules ICAM1 and VCAM1. Acts as a monocyte and mast cell chemoattractant. Can stimulate mast cell degranulation and activation which generates chemokines, histamine and cytokines inducing further leukocyte recruitment to the sites of inflammation. Can inhibit the activity of matrix metalloproteinases; MMP2, MMP3 and MMP9 by chelating Zn(2+) from their active sites. The chain is Protein S100-A12 (S100A12) from Bos taurus (Bovine).